Here is a 632-residue protein sequence, read N- to C-terminus: 1-deoxy-D-xylulose-5-phosphate synthase (632 aa).

Residues His79 and 120-122 each bind thiamine diphosphate; that span reads GHA. Asp152 serves as a coordination point for Mg(2+). Residues 153-154, Asn181, Phe293, and Glu377 each bind thiamine diphosphate; that span reads GA. Asn181 contacts Mg(2+).

It belongs to the transketolase family. DXPS subfamily. In terms of assembly, homodimer. Mg(2+) serves as cofactor. Requires thiamine diphosphate as cofactor.

It catalyses the reaction D-glyceraldehyde 3-phosphate + pyruvate + H(+) = 1-deoxy-D-xylulose 5-phosphate + CO2. Its pathway is metabolic intermediate biosynthesis; 1-deoxy-D-xylulose 5-phosphate biosynthesis; 1-deoxy-D-xylulose 5-phosphate from D-glyceraldehyde 3-phosphate and pyruvate: step 1/1. Functionally, catalyzes the acyloin condensation reaction between C atoms 2 and 3 of pyruvate and glyceraldehyde 3-phosphate to yield 1-deoxy-D-xylulose-5-phosphate (DXP). The chain is 1-deoxy-D-xylulose-5-phosphate synthase from Parabacteroides distasonis (strain ATCC 8503 / DSM 20701 / CIP 104284 / JCM 5825 / NCTC 11152).